Reading from the N-terminus, the 491-residue chain is La-related protein 6 (491 aa).

The tract at residues 1–87 is disordered; sequence MAQSGGEARP…REDLEQEWKP (87 aa). An N-acetylalanine modification is found at alanine 2. Acidic residues predominate over residues 24-37; sequence EAEDVDELEDEEEG. Serine 56 and serine 58 each carry phosphoserine. Residues 86 to 177 form the HTH La-type RNA-binding domain; the sequence is KPPDEELIKK…RRTTPVPLFP (92 aa). The region spanning 184-296 is the RRM domain; sequence KMLLVYDLYL…KAVLIGMKPP (113 aa). The Nuclear export signal signature appears at 186–193; sequence LLVYDLYL. Disordered regions lie at residues 293–403 and 423–491; these read MKPP…EEGR and SSVT…RACV. The Nuclear localization signal motif lies at 296–302; that stretch reads PKKKPAK. Residues 332–346 show a composition bias toward low complexity; sequence DESSANSSSDPESNP. Polar residues-rich tracts occupy residues 359 to 386 and 444 to 453; these read NKLS…SSPL and QEKSPGTSPL. In terms of domain architecture, SUZ-C spans 427 to 485; it reads PSGSPWVRRRRQAEMGTQEKSPGTSPLLSRKMQTADGLPVGVLRLPRGPDNTRGFHGHE. Residues 482-491 show a composition bias toward basic and acidic residues; that stretch reads HGHERSRACV.

In terms of assembly, interacts (via the HTH domain) with VIM/vimentin. Interacts (via C-terminus) with non-muscle myosin MYH10. Interacts (via C-terminus) with DHX9. In terms of tissue distribution, expressed in numerous tissues.

It is found in the cytoplasm. It localises to the nucleus. Regulates the coordinated translation of type I collagen alpha-1 and alpha-2 mRNAs, CO1A1 and CO1A2. Stabilizes mRNAs through high-affinity binding of a stem-loop structure in their 5' UTR. This regulation requires VIM and MYH10 filaments, and the helicase DHX9. The chain is La-related protein 6 (LARP6) from Homo sapiens (Human).